A 1064-amino-acid chain; its full sequence is Carbamoyl phosphate synthase large chain (1064 aa).

Residues 1–401 (MPKRNDIKKI…SLLKAVRSLE (401 aa)) form a carboxyphosphate synthetic domain region. Positions 129, 169, 175, 176, 208, 210, 215, 241, 242, 243, 284, and 298 each coordinate ATP. The 195-residue stretch at 133–327 (KELCESINEP…IAKMSAKIAI (195 aa)) folds into the ATP-grasp 1 domain. The Mg(2+) site is built by Q284, E298, and N300. Residues Q284, E298, and N300 each coordinate Mn(2+). The oligomerization domain stretch occupies residues 402–546 (IGVFHNEMTE…YSTYEWENES (145 aa)). The segment at 547–929 (KRSDKEKIIV…ALYKSFEAAK (383 aa)) is carbamoyl phosphate synthetic domain. Positions 671–861 (EKALQDLDIP…MAQLATQMIL (191 aa)) constitute an ATP-grasp 2 domain. Residues R707, S746, L748, E752, G777, V778, H779, S780, Q820, and E832 each contribute to the ATP site. Residues Q820, E832, and N834 each coordinate Mg(2+). Mn(2+) contacts are provided by Q820, E832, and N834. Positions 930–1064 (LHMADYGSVL…QSRSFTTKNI (135 aa)) constitute an MGS-like domain. Residues 930-1064 (LHMADYGSVL…QSRSFTTKNI (135 aa)) form an allosteric domain region.

Belongs to the CarB family. In terms of assembly, composed of two chains; the small (or glutamine) chain promotes the hydrolysis of glutamine to ammonia, which is used by the large (or ammonia) chain to synthesize carbamoyl phosphate. Tetramer of heterodimers (alpha,beta)4. Mg(2+) is required as a cofactor. It depends on Mn(2+) as a cofactor.

It catalyses the reaction hydrogencarbonate + L-glutamine + 2 ATP + H2O = carbamoyl phosphate + L-glutamate + 2 ADP + phosphate + 2 H(+). The catalysed reaction is hydrogencarbonate + NH4(+) + 2 ATP = carbamoyl phosphate + 2 ADP + phosphate + 2 H(+). It participates in amino-acid biosynthesis; L-arginine biosynthesis; carbamoyl phosphate from bicarbonate: step 1/1. The protein operates within pyrimidine metabolism; UMP biosynthesis via de novo pathway; (S)-dihydroorotate from bicarbonate: step 1/3. In terms of biological role, large subunit of the glutamine-dependent carbamoyl phosphate synthetase (CPSase). CPSase catalyzes the formation of carbamoyl phosphate from the ammonia moiety of glutamine, carbonate, and phosphate donated by ATP, constituting the first step of 2 biosynthetic pathways, one leading to arginine and/or urea and the other to pyrimidine nucleotides. The large subunit (synthetase) binds the substrates ammonia (free or transferred from glutamine from the small subunit), hydrogencarbonate and ATP and carries out an ATP-coupled ligase reaction, activating hydrogencarbonate by forming carboxy phosphate which reacts with ammonia to form carbamoyl phosphate. This Lactococcus lactis subsp. cremoris (strain MG1363) protein is Carbamoyl phosphate synthase large chain.